The chain runs to 217 residues: MTYIVALTGGISSGKTTISNGFKKIGINVIDTDIIAKNIIEKNLQVSFSIKRKFGKKILNIDNSINRLLLRQYVFNNHHHRLWLENLLHPKIYQESKHQIKMTQSNWCLWVVPLLVEKKLEKKAHRILLIDTPVKEQIKRTVRRDKISFLEAKKIIALQSSRKTRISLSDDIIFNKKNFKKINLYIYYFNLLYSHLSRIYNKNKTINIKKNFLTKFY.

The 200-residue stretch at 4 to 203 (IVALTGGISS…SHLSRIYNKN (200 aa)) folds into the DPCK domain. 12–17 (SSGKTT) lines the ATP pocket.

Belongs to the CoaE family.

Its subcellular location is the cytoplasm. It carries out the reaction 3'-dephospho-CoA + ATP = ADP + CoA + H(+). The protein operates within cofactor biosynthesis; coenzyme A biosynthesis; CoA from (R)-pantothenate: step 5/5. In terms of biological role, catalyzes the phosphorylation of the 3'-hydroxyl group of dephosphocoenzyme A to form coenzyme A. The sequence is that of Dephospho-CoA kinase from Buchnera aphidicola subsp. Acyrthosiphon pisum (strain APS) (Acyrthosiphon pisum symbiotic bacterium).